Reading from the N-terminus, the 180-residue chain is Large ribosomal subunit protein uL5 (180 aa).

The protein belongs to the universal ribosomal protein uL5 family. As to quaternary structure, part of the 50S ribosomal subunit; part of the 5S rRNA/L5/L18/L25 subcomplex. Contacts the 5S rRNA and the P site tRNA. Forms a bridge to the 30S subunit in the 70S ribosome.

Its function is as follows. This is one of the proteins that bind and probably mediate the attachment of the 5S RNA into the large ribosomal subunit, where it forms part of the central protuberance. In the 70S ribosome it contacts protein S13 of the 30S subunit (bridge B1b), connecting the 2 subunits; this bridge is implicated in subunit movement. Contacts the P site tRNA; the 5S rRNA and some of its associated proteins might help stabilize positioning of ribosome-bound tRNAs. The chain is Large ribosomal subunit protein uL5 from Rubrobacter xylanophilus (strain DSM 9941 / JCM 11954 / NBRC 16129 / PRD-1).